Here is a 538-residue protein sequence, read N- to C-terminus: Furcatin hydrolase (538 aa).

The transit peptide at Met-1–Ser-66 directs the protein to the chloroplast. The segment at Ser-18–Pro-37 is disordered. Residues Gln-88, His-192, and Asn-237–Glu-238 contribute to the a beta-D-glucoside site. Glu-238 functions as the Proton donor in the catalytic mechanism. A disulfide bond links Cys-257 and Cys-260. A beta-D-glucoside contacts are provided by residues Tyr-376, Glu-447, Trp-494, Glu-501 to Trp-502, and Phe-510. The Nucleophile role is filled by Glu-447.

It belongs to the glycosyl hydrolase 1 family. In terms of tissue distribution, expressed in young and mature leaves, but not in fruit and stem.

It localises to the plastid. Its subcellular location is the chloroplast. The catalysed reaction is 7-[beta-D-apiofuranosyl-(1-&gt;6)-beta-D-glucopyranosyloxy]isoflavonoid + H2O = a 7-hydroxyisoflavonoid + beta-D-apiofuranosyl-(1-&gt;6)-D-glucose.. Its function is as follows. Disaccharide-specific acuminosidase, hydrolyzes the beta-glycosidic bond between p-allylphenol and acuminose with retention of anomeric configuration. Has highest activity towards furcatin, and lower activity towards beta-primeverosides and beta-vicianoside. Has very low activity towards beta-gentobiosides. The protein is Furcatin hydrolase of Viburnum furcatum (Scarlet leaved viburnum).